The primary structure comprises 66 residues: MILVNVHAGNCDNTLKNFKKKLQRELYFRKMKEQRYYETPSAKRVRKAQEAARRQRKFARKKMFDE.

It belongs to the bacterial ribosomal protein bS21 family.

In Rickettsia peacockii (strain Rustic), this protein is Small ribosomal subunit protein bS21.